A 796-amino-acid chain; its full sequence is AUGMIN subunit 5 (796 aa).

A disordered region spans residues 79 to 120; that stretch reads HGGSSNASIGSSVNPGKEESKSKGRRKDKTVTGESSSYAEDR. The segment covering 80 to 92 has biased composition (polar residues); it reads GGSSNASIGSSVN. Coiled-coil stretches lie at residues 115–191 and 462–501; these read SYAE…EATR and GKEREAAGLRASLNTLLSEIQRLNKLCAERKEAEDSLKKK.

This sequence belongs to the HAUS5 family. As to quaternary structure, part of the augmin complex composed of 8 subunits. The complex acts on microtubules and interacts with gamma-tubulin in spindles and the phragmoplast.

It is found in the cytoplasm. It localises to the cytoskeleton. The protein resides in the spindle. The protein localises to the phragmoplast. Involved in microtubules reorganization during spindle and phragmoplast development. This Arabidopsis thaliana (Mouse-ear cress) protein is AUGMIN subunit 5.